The primary structure comprises 436 residues: Enolase (436 aa).

(2R)-2-phosphoglycerate is bound at residue glutamine 167. Residue glutamate 209 is the Proton donor of the active site. The Mg(2+) site is built by aspartate 246, glutamate 291, and aspartate 318. Residues lysine 343, arginine 372, serine 373, and lysine 394 each contribute to the (2R)-2-phosphoglycerate site. Lysine 343 functions as the Proton acceptor in the catalytic mechanism.

It belongs to the enolase family. In terms of assembly, component of the RNA degradosome, a multiprotein complex involved in RNA processing and mRNA degradation. Mg(2+) serves as cofactor.

The protein localises to the cytoplasm. The protein resides in the secreted. It is found in the cell surface. It catalyses the reaction (2R)-2-phosphoglycerate = phosphoenolpyruvate + H2O. It functions in the pathway carbohydrate degradation; glycolysis; pyruvate from D-glyceraldehyde 3-phosphate: step 4/5. In terms of biological role, catalyzes the reversible conversion of 2-phosphoglycerate (2-PG) into phosphoenolpyruvate (PEP). It is essential for the degradation of carbohydrates via glycolysis. This chain is Enolase, found in Haemophilus influenzae (strain PittEE).